The chain runs to 414 residues: Putative competence-damage inducible protein (414 aa).

This sequence belongs to the CinA family.

The polypeptide is Putative competence-damage inducible protein (Listeria monocytogenes serotype 4b (strain CLIP80459)).